The sequence spans 85 residues: UPF0291 protein SPCG_1462 (85 aa).

The tract at residues 62-85 (TPEKLRQVQREKGLHGRSLDDPNS) is disordered.

Belongs to the UPF0291 family.

The protein resides in the cytoplasm. The polypeptide is UPF0291 protein SPCG_1462 (Streptococcus pneumoniae (strain CGSP14)).